The primary structure comprises 261 residues: MSRKPLIAGNWKMNLNHFEAIALVQKIAFSLPDKYFDKVDVTVIPPFTDIRSVQTLVDGDKLRLTYGAQDLSVYDSGAYTGEVSGAFLAKLGVTYVVVGHSERRQYHGEDDALVAAKAAAALKHGLTPIVCIGEALDIREAGDHVQYNVNSLRGSLAGLSAEQVGKVVIAYEPVWAIGTGRVASAADAQEVCAAIRAELAQIANADVAGSVRVLYGGSANAKNVGEIVAQEDVDGALVGGASLDGEQFAQMSAIAAGGPLL.

10–12 contacts substrate; it reads NWK. His100 functions as the Electrophile in the catalytic mechanism. The active-site Proton acceptor is Glu172. Substrate contacts are provided by residues Gly178, Ser218, and 239-240; that span reads GG.

The protein belongs to the triosephosphate isomerase family. As to quaternary structure, homodimer.

It localises to the cytoplasm. It catalyses the reaction D-glyceraldehyde 3-phosphate = dihydroxyacetone phosphate. The protein operates within carbohydrate biosynthesis; gluconeogenesis. It functions in the pathway carbohydrate degradation; glycolysis; D-glyceraldehyde 3-phosphate from glycerone phosphate: step 1/1. Involved in the gluconeogenesis. Catalyzes stereospecifically the conversion of dihydroxyacetone phosphate (DHAP) to D-glyceraldehyde-3-phosphate (G3P). This chain is Triosephosphate isomerase, found in Mycobacteroides abscessus (strain ATCC 19977 / DSM 44196 / CCUG 20993 / CIP 104536 / JCM 13569 / NCTC 13031 / TMC 1543 / L948) (Mycobacterium abscessus).